The chain runs to 37 residues: Large ribosomal subunit protein bL36 (37 aa).

The protein belongs to the bacterial ribosomal protein bL36 family.

The chain is Large ribosomal subunit protein bL36 from Ureaplasma urealyticum serovar 10 (strain ATCC 33699 / Western).